The following is a 390-amino-acid chain: Queuine tRNA-ribosyltransferase (390 aa).

Asp92 (proton acceptor) is an active-site residue. Substrate contacts are provided by residues 92-96 (DSGGF), Asp146, Gln195, and Gly222. Positions 253-259 (GVGTPED) are RNA binding. Residue Asp272 is the Nucleophile of the active site. Residues 277–281 (TRNAR) form an RNA binding; important for wobble base 34 recognition region. Cys310, Cys312, Cys315, and His354 together coordinate Zn(2+).

It belongs to the queuine tRNA-ribosyltransferase family. Homodimer. Within each dimer, one monomer is responsible for RNA recognition and catalysis, while the other monomer binds to the replacement base PreQ1. The cofactor is Zn(2+).

The catalysed reaction is 7-aminomethyl-7-carbaguanine + guanosine(34) in tRNA = 7-aminomethyl-7-carbaguanosine(34) in tRNA + guanine. The protein operates within tRNA modification; tRNA-queuosine biosynthesis. Functionally, catalyzes the base-exchange of a guanine (G) residue with the queuine precursor 7-aminomethyl-7-deazaguanine (PreQ1) at position 34 (anticodon wobble position) in tRNAs with GU(N) anticodons (tRNA-Asp, -Asn, -His and -Tyr). Catalysis occurs through a double-displacement mechanism. The nucleophile active site attacks the C1' of nucleotide 34 to detach the guanine base from the RNA, forming a covalent enzyme-RNA intermediate. The proton acceptor active site deprotonates the incoming PreQ1, allowing a nucleophilic attack on the C1' of the ribose to form the product. After dissociation, two additional enzymatic reactions on the tRNA convert PreQ1 to queuine (Q), resulting in the hypermodified nucleoside queuosine (7-(((4,5-cis-dihydroxy-2-cyclopenten-1-yl)amino)methyl)-7-deazaguanosine). The chain is Queuine tRNA-ribosyltransferase from Acidovorax ebreus (strain TPSY) (Diaphorobacter sp. (strain TPSY)).